Reading from the N-terminus, the 528-residue chain is MNREHQREVDKRRTFGIISHPDAGKTTLTEKLLLFGGAIQMAGTVKSRKAARHATSDWMAMEQERGISVTTSVMKFHHNGYEINLLDTPGHQDFSEDTYRVLTAVDSALLVIDSAKGVEAQTLKLMDVCRMRSTPIVTFINKLDRDGLHPLEVMDDIESRLNIQCSPLTWPIGMGADFKGTWDIRTGRLHMFTPANDGRIASGRIIEGLDNPELDEALGEQAVTLRDELALLAEAGNPFDKERYLKGELTPVFFGSAINNFGVREMLDTFVDLAPAPQPRPATTRTVSPYEEDFSGVVFKIQANMDKNHRDRIAFMRICSGKFTRGMKVRHHRIGKEVALANATIFMAQDRTGVEEAWPGDIIGIHNHGTIKIGDTFSLREPLKFVGIPNFAPEHFRRVVLRDPMKAKQLQKGLEQLAEEGAVQLFRPLLGNDYILGAVGVLQFEVIVARLKDEYNVNALYEGCNITTARWLHTDDPKTMAEFRDYYRSELAMDAEGCLAYLAPNPWRLESAVERYPKMEFRTTREIS.

Positions 10–278 (DKRRTFGIIS…TFVDLAPAPQ (269 aa)) constitute a tr-type G domain. Residues 19–26 (SHPDAGKT), 87–91 (DTPGH), and 141–144 (NKLD) each bind GTP.

It belongs to the TRAFAC class translation factor GTPase superfamily. Classic translation factor GTPase family. PrfC subfamily.

It localises to the cytoplasm. In terms of biological role, increases the formation of ribosomal termination complexes and stimulates activities of RF-1 and RF-2. It binds guanine nucleotides and has strong preference for UGA stop codons. It may interact directly with the ribosome. The stimulation of RF-1 and RF-2 is significantly reduced by GTP and GDP, but not by GMP. In Oleidesulfovibrio alaskensis (strain ATCC BAA-1058 / DSM 17464 / G20) (Desulfovibrio alaskensis), this protein is Peptide chain release factor 3.